The following is a 257-amino-acid chain: NAD-dependent protein deacetylase (257 aa).

In terms of domain architecture, Deacetylase sirtuin-type spans 3 to 252 (NGECLEGGRK…DLVLNEVKGI (250 aa)). NAD(+) is bound by residues alanine 29, threonine 33, phenylalanine 40, arginine 41, glutamine 105, isoleucine 107, aspartate 108, and histidine 123. Phenylalanine 40 serves as a coordination point for nicotinamide. Nicotinamide-binding residues include isoleucine 107 and aspartate 108. Histidine 123 functions as the Proton acceptor in the catalytic mechanism. Cysteine 131, cysteine 134, cysteine 156, and cysteine 159 together coordinate Zn(2+). NAD(+) contacts are provided by serine 195, serine 196, and asparagine 220.

Belongs to the sirtuin family. Class U subfamily. The cofactor is Zn(2+).

Its subcellular location is the cytoplasm. The enzyme catalyses N(6)-acetyl-L-lysyl-[protein] + NAD(+) + H2O = 2''-O-acetyl-ADP-D-ribose + nicotinamide + L-lysyl-[protein]. Its function is as follows. NAD-dependent protein deacetylase which modulates the activities of several enzymes which are inactive in their acetylated form. Deacetylates the N-terminal lysine residue of Alba, the major archaeal chromatin protein and that, in turn, increases Alba's DNA binding affinity, thereby repressing transcription. The sequence is that of NAD-dependent protein deacetylase from Caldivirga maquilingensis (strain ATCC 700844 / DSM 13496 / JCM 10307 / IC-167).